Here is a 440-residue protein sequence, read N- to C-terminus: Xaa-Pro dipeptidase (440 aa).

Mn(2+) contacts are provided by D244, D255, H335, E380, and E419.

Belongs to the peptidase M24B family. Bacterial-type prolidase subfamily. Mn(2+) is required as a cofactor.

It carries out the reaction Xaa-L-Pro dipeptide + H2O = an L-alpha-amino acid + L-proline. Splits dipeptides with a prolyl residue in the C-terminal position. This Shewanella piezotolerans (strain WP3 / JCM 13877) protein is Xaa-Pro dipeptidase.